Reading from the N-terminus, the 520-residue chain is Maturase K (520 aa).

It belongs to the intron maturase 2 family. MatK subfamily.

Its subcellular location is the plastid. It localises to the chloroplast. Its function is as follows. Usually encoded in the trnK tRNA gene intron. Probably assists in splicing its own and other chloroplast group II introns. This is Maturase K from Linum perenne (Perennial flax).